Consider the following 241-residue polypeptide: Accessory protein p30II (241 aa).

Short sequence motifs (nuclear localization signal) lie at residues 73–78 (RRCRSR) and 91–98 (GPRRSRPR). The segment at 86-153 (AFPPGGPRRS…HRNSPTDTKL (68 aa)) is disordered. Residues 107–138 (PSSTVSSSSLSFNSSSKDNSPSTNSSTSRSSG) are compositionally biased toward low complexity. The Mitochondrial targeting signal motif lies at 175-184 (LRVWRLCTRR).

The protein belongs to the HTLV-1 accessory protein p30II family. As to quaternary structure, p30II binds to the KIX domains of CREBBP and EP300.

It is found in the host nucleus. Its subcellular location is the host nucleolus. It localises to the host mitochondrion inner membrane. P30II is a multifunctional regulator that sequesters EP300/CREBBP and down-regulates CREB-responsive element (CRE) and Tax-responsive element (TRE) mediated transcription. Specifically binds and represses tax/rex mRNA nuclear export. Since Tax and Rex are positive regulators of viral gene expression, their inhibition by p30II reduces virion production, and allows the virus to escape the host immune surveillance and persist latently in an immune-competent host. Functionally, p13II increases mitochondrial permeability to monovalent cations, producing a rapid, membrane potential-dependent influx of potassium. This could involve a channel-forming activity. Interferes with cell proliferation and transformation and promotes apoptosis induced by ceramide and Fas ligand, probably using the Ras signaling. The polypeptide is Accessory protein p30II (Human T-cell leukemia virus 1 (isolate Caribbea HS-35 subtype A) (HTLV-1)).